Reading from the N-terminus, the 913-residue chain is Proline and serine-rich protein 1 (913 aa).

The residue at position 1 (methionine 1) is an N-acetylmethionine. Disordered regions lie at residues 233–291 (VPPP…PAVS), 488–507 (ASLS…ATNK), 592–618 (SEPT…TLGL), and 888–913 (DGFP…SGWQ). Over residues 251–275 (LSSQSKPTQSQTFSTPASQLFSPHG) the composition is skewed to polar residues. Positions 276 to 291 (SSNPSTPAATPVPAVS) are enriched in low complexity. Positions 488-506 (ASLSSLPNRNSDSPASATN) are enriched in polar residues. A compositionally biased stretch (polar residues) spans 893-913 (YPSTPGTPFSLQTGLSQSGWQ).

Interacts with TET2 and OGT; this interaction mediates TET2 O-GlcNAcylation and stability by promoting the interaction between OGT and TET2. Interacts with KDM6A. Interacts with TET1. Glycosylated. Interaction with OGT leads to GlcNAcylation.

Mediates OGT interaction with and O-GlcNAcylation of TET2 to control TET2 stabilization at enhancers and CpG islands (CGIs). The protein is Proline and serine-rich protein 1 of Mus musculus (Mouse).